The following is a 464-amino-acid chain: MKRIKIKELLSNSSQYIDQQVVLKGWVRTKRGNKHVAFVALNDGSTIHTIQIVLDVAKFNEEQLKDVTTGACISISGKVVTSQGAGQSIEVQGDTLEVIGVADPETYPLQKKGHSLEFLREIAHLRPRTNTFSCVLRLRHAMAFAVHSFFNEKGFVYVHTPIITGSDAEGAGAMFQVTTLDLKNPSKTKEGEVDFTKDFFGKATNLTVSGQLEGELAAMALGEVYTFGPTFRAENSNTTRHLAEFWMIEPEMAFYEIQDNMDLAEEFLKYLVKYALDNCIDDLNFLNEMYDKELIERLKSVVETPFVRLNYTEAVDILIATKQKFEYKVEWGIDLQSEHERYLVEKHFKKPVILTNYPKAIKAFYMKANEDGKTVRAMDVLFPGIGEIIGGSQREDNLEKLQERCKEVGIHENDIWWYLETRKFGSAPHSGFGLGFERLMLFVTGMGNIRDVIPFPRTPQSAEF.

Belongs to the class-II aminoacyl-tRNA synthetase family. As to quaternary structure, homodimer.

The protein resides in the cytoplasm. It carries out the reaction tRNA(Asn) + L-asparagine + ATP = L-asparaginyl-tRNA(Asn) + AMP + diphosphate + H(+). The sequence is that of Asparagine--tRNA ligase from Cytophaga hutchinsonii (strain ATCC 33406 / DSM 1761 / CIP 103989 / NBRC 15051 / NCIMB 9469 / D465).